A 351-amino-acid polypeptide reads, in one-letter code: Dihydroorotate dehydrogenase (quinone) (351 aa).

FMN is bound by residues 67-71 (AGFDK) and Thr91. Lys71 is a substrate binding site. 116 to 120 (NAMGF) is a binding site for substrate. 2 residues coordinate FMN: Asn145 and Asn178. Asn178 lines the substrate pocket. The Nucleophile role is filled by Ser181. A substrate-binding site is contributed by Asn183. Residues Lys214 and Thr242 each contribute to the FMN site. 243 to 244 (NT) lines the substrate pocket. Residues Gly262, Gly291, and 312-313 (YS) each bind FMN.

It belongs to the dihydroorotate dehydrogenase family. Type 2 subfamily. In terms of assembly, monomer. FMN serves as cofactor.

It localises to the cell membrane. The catalysed reaction is (S)-dihydroorotate + a quinone = orotate + a quinol. The protein operates within pyrimidine metabolism; UMP biosynthesis via de novo pathway; orotate from (S)-dihydroorotate (quinone route): step 1/1. In terms of biological role, catalyzes the conversion of dihydroorotate to orotate with quinone as electron acceptor. The protein is Dihydroorotate dehydrogenase (quinone) of Helicobacter pylori (strain HPAG1).